The sequence spans 349 residues: MSKFLKKIKIIKPDDWHVHLRDNEILKKVSQYTGTFYKRAIIMPNLEEPITNCFRSISYRRRILNSMTPNTAFQPLMICYLTEKTSPEELQQGFFKKIFVGAKLYPHCSTTNSKYGIKNINNIYHLFNIMEKIKMPLLIHGEENNLNIDIYDREAKFIENTLKPLRKKFPELKIILEHITTEEAISYIEECNSSYLAGTITPHHLMLNRNNMFIDGIQPHLYCLPLLKRKKHQIALRNVISSGSKNFFLGSDTAPHFHKNKINTFGCAGIFNAPSSLLCYVSVFEEMNALQHFQSFCSENGPNFYNMPINKETITLVKKPHKILEKINIGKNIIVPFLAGKRLDWSIEK.

2 residues coordinate Zn(2+): His-17 and His-19. Substrate contacts are provided by residues 19-21 (HLR) and Asn-45. Positions 103, 140, and 178 each coordinate Zn(2+). Lys-103 bears the N6-carboxylysine mark. His-140 is a substrate binding site. Residue Leu-224 participates in substrate binding. Zn(2+) is bound at residue Asp-252. Asp-252 is an active-site residue. The substrate site is built by His-256 and Ala-268.

It belongs to the metallo-dependent hydrolases superfamily. DHOase family. Class II DHOase subfamily. In terms of assembly, homodimer. It depends on Zn(2+) as a cofactor.

The enzyme catalyses (S)-dihydroorotate + H2O = N-carbamoyl-L-aspartate + H(+). It participates in pyrimidine metabolism; UMP biosynthesis via de novo pathway; (S)-dihydroorotate from bicarbonate: step 3/3. Its function is as follows. Catalyzes the reversible cyclization of carbamoyl aspartate to dihydroorotate. The polypeptide is Dihydroorotase (Buchnera aphidicola subsp. Schizaphis graminum (strain Sg)).